We begin with the raw amino-acid sequence, 282 residues long: BURP domain-containing protein BNM2A (282 aa).

An N-terminal signal peptide occupies residues 1 to 26 (MASLRFSVTFPALLSLLLLSLWVVEA). The BURP domain occupies 60–282 (FFKISDLKLG…PLDNIVWVSK (223 aa)).

As to expression, expressed in the radicle and cotyledon of germinating seeds 2 days post-imbibition (DPI), in stems and roots of 30-DPI young plants and in floral buds, but not in fully open flowers or leaves. Expressed in the embryo and seed coat tissues of developing seeds. The protein accumulates only in seeds and only long after transcript accumulation becomes evident.

The protein localises to the protein storage vacuole. In Brassica napus (Rape), this protein is BURP domain-containing protein BNM2A.